Reading from the N-terminus, the 308-residue chain is Taste receptor type 2 member 41 (308 aa).

Residues 1–6 (MLSTVS) lie on the Extracellular side of the membrane. A helical membrane pass occupies residues 7 to 27 (VFFMSIFVLLCFLGILANGFI). The Cytoplasmic segment spans residues 28–60 (VLMLSREWLWRGRLLPSDMILLSLGTSRFCQQC). A helical membrane pass occupies residues 61 to 81 (VGLVNSFYYSLHLVEYSRSLA). Residues 82-90 (RQLISLHMD) are Extracellular-facing. Residues 91 to 111 (FLNSATFWFGTWLSVLFCIKI) form a helical membrane-spanning segment. Residues 112 to 128 (ANFSHPAFLWLKWRFPA) lie on the Cytoplasmic side of the membrane. The chain crosses the membrane as a helical span at residues 129–149 (LVPWLLLGSILVSFIVTLMFF). The Extracellular portion of the chain corresponds to 150–184 (WGNHTVYQAFLRRKFSGNTTFKEWNRRLEIDYFMP). Residues N152 and N167 are each glycosylated (N-linked (GlcNAc...) asparagine). Residues 185-205 (LKLVTTSIPCSLFLVSILLLI) form a helical membrane-spanning segment. At 206 to 239 (NSLRRHSQRMQHNAHSLQDPNTQAHSRALKSLIS) the chain is on the cytoplasmic side. The chain crosses the membrane as a helical span at residues 240–260 (FLVLYALSYVSMVIDATVVIS). The Extracellular portion of the chain corresponds to 261–264 (SDNV). A helical membrane pass occupies residues 265–285 (WYWPWQIILYLCMSVHPFILI). Residues 286-308 (TNNLKFRGTFRQLLLLARGFWVT) are Cytoplasmic-facing.

It belongs to the G-protein coupled receptor T2R family. In terms of tissue distribution, expressed in subsets of taste receptor cells of the tongue and palate epithelium and exclusively in gustducin-positive cells. Expressed in 15% taste bud cells in circumvallate and foliate papillae but only in 2% in fungiform papillae. Expressed in the duodenum, antrum and fundus (part of the stomach).

It localises to the membrane. In terms of biological role, receptor that may play a role in the perception of bitterness and is gustducin-linked. May play a role in sensing the chemical composition of the gastrointestinal content. The activity of this receptor may stimulate alpha gustducin, mediate PLC-beta-2 activation and lead to the gating of TRPM5. The chain is Taste receptor type 2 member 41 (Tas2r41) from Rattus norvegicus (Rat).